The chain runs to 150 residues: 3-dehydroquinate dehydratase (150 aa).

The active-site Proton acceptor is the Tyr-26. 3 residues coordinate substrate: Asn-77, His-83, and Asp-90. His-103 functions as the Proton donor in the catalytic mechanism. Residues 104 to 105 (LS) and Arg-114 contribute to the substrate site.

It belongs to the type-II 3-dehydroquinase family. Homododecamer.

The enzyme catalyses 3-dehydroquinate = 3-dehydroshikimate + H2O. The protein operates within metabolic intermediate biosynthesis; chorismate biosynthesis; chorismate from D-erythrose 4-phosphate and phosphoenolpyruvate: step 3/7. In terms of biological role, catalyzes a trans-dehydration via an enolate intermediate. The sequence is that of 3-dehydroquinate dehydratase from Pectobacterium atrosepticum (strain SCRI 1043 / ATCC BAA-672) (Erwinia carotovora subsp. atroseptica).